A 251-amino-acid polypeptide reads, in one-letter code: Adapter protein MecA (251 aa).

It belongs to the MecA family. As to quaternary structure, homodimer.

In terms of biological role, enables the recognition and targeting of unfolded and aggregated proteins to the ClpC protease or to other proteins involved in proteolysis. The polypeptide is Adapter protein MecA (Streptococcus agalactiae serotype Ia (strain ATCC 27591 / A909 / CDC SS700)).